The sequence spans 466 residues: DNA repair protein RadA (466 aa).

The segment at 12-29 (CSECQHVAPKWVGRCANC) adopts a C4-type zinc-finger fold. An ATP-binding site is contributed by 100 to 107 (GDPGVGKS). The RadA KNRFG motif motif lies at 261–265 (KNRFG). Residues 359 to 466 (DLYLSTVGGM…MREIAIAGAQ (108 aa)) are lon-protease-like.

This sequence belongs to the RecA family. RadA subfamily. In terms of assembly, interacts with DisA.

DNA-dependent ATPase involved in processing of recombination intermediates, plays a role in repairing DNA breaks. Stimulates the branch migration of RecA-mediated strand transfer reactions, allowing the 3' invading strand to extend heteroduplex DNA faster. Binds ssDNA in the presence of ADP but not other nucleotides, has ATPase activity that is stimulated by ssDNA and various branched DNA structures, but inhibited by SSB. Does not have RecA's homology-searching function. Also inhibits the diadenylate cyclase activity of DisA. The sequence is that of DNA repair protein RadA from Mycolicibacterium smegmatis (strain ATCC 700084 / mc(2)155) (Mycobacterium smegmatis).